Consider the following 503-residue polypeptide: Aromatase 1 (503 aa).

C437 contributes to the heme binding site.

This sequence belongs to the cytochrome P450 family. It depends on heme as a cofactor.

It localises to the membrane. It carries out the reaction testosterone + 3 reduced [NADPH--hemoprotein reductase] + 3 O2 = 17beta-estradiol + formate + 3 oxidized [NADPH--hemoprotein reductase] + 4 H2O + 4 H(+). The catalysed reaction is androst-4-ene-3,17-dione + 3 reduced [NADPH--hemoprotein reductase] + 3 O2 = estrone + formate + 3 oxidized [NADPH--hemoprotein reductase] + 4 H2O + 4 H(+). In terms of biological role, catalyzes the formation of aromatic C18 estrogens from C19 androgens. This is Aromatase 1 (CYP19A1) from Sus scrofa (Pig).